Here is an 860-residue protein sequence, read N- to C-terminus: Nuclear cap-binding protein complex subunit 1 (860 aa).

One can recognise an MIF4G domain in the interval 36–271; sequence CKDMLPDIRT…SNVKNALAND (236 aa).

The protein belongs to the NCBP1 family. Component of the nuclear cap-binding complex (CBC).

The protein resides in the nucleus. Component of the cap-binding complex (CBC) involved in the nuclear export of capped U snRNAs. The CBC complex is required for efficient pre-mRNA splicing through efficient commitment complex and spliceosome formation; and involved in rRNA processing at sites A0, A1 and A2. The polypeptide is Nuclear cap-binding protein complex subunit 1 (CBC1) (Eremothecium gossypii (strain ATCC 10895 / CBS 109.51 / FGSC 9923 / NRRL Y-1056) (Yeast)).